The chain runs to 188 residues: U1 small nuclear ribonucleoprotein C-2 (188 aa).

The Matrin-type zinc finger occupies 4-36 (YYCDYCDVFLVSESPSVRKAHNSGRNHLTNVRD). Positions 57-188 (FETGGGNSTS…MNPDRARQLG (132 aa)) are disordered. Residues 72-82 (GNPPGSQPGPP) are compositionally biased toward pro residues. Low complexity predominate over residues 109-124 (AMLALMNGQNGMSSPG). The span at 125-141 (SGPPPMRFAGPPIPNNM) shows a compositional bias: pro residues.

Belongs to the U1 small nuclear ribonucleoprotein C family. U1 snRNP is composed of the 7 core Sm proteins B/B', D1, D2, D3, E, F and G that assemble in a heptameric protein ring on the Sm site of the small nuclear RNA to form the core snRNP, and at least 3 U1 snRNP-specific proteins U1-70K, U1-A and U1-C. U1-C interacts with U1 snRNA and the 5' splice-site region of the pre-mRNA.

It is found in the nucleus. Its function is as follows. Component of the spliceosomal U1 snRNP, which is essential for recognition of the pre-mRNA 5' splice-site and the subsequent assembly of the spliceosome. U1-C is directly involved in initial 5' splice-site recognition for both constitutive and regulated alternative splicing. The interaction with the 5' splice-site seems to precede base-pairing between the pre-mRNA and the U1 snRNA. Stimulates commitment or early (E) complex formation by stabilizing the base pairing of the 5' end of the U1 snRNA and the 5' splice-site region. The sequence is that of U1 small nuclear ribonucleoprotein C-2 from Puccinia graminis f. sp. tritici (strain CRL 75-36-700-3 / race SCCL) (Black stem rust fungus).